A 175-amino-acid polypeptide reads, in one-letter code: Cytidylate kinase (175 aa).

7 to 15 (GLPGSGTTT) provides a ligand contact to ATP.

It belongs to the cytidylate kinase family. Type 2 subfamily.

The protein localises to the cytoplasm. The enzyme catalyses CMP + ATP = CDP + ADP. The catalysed reaction is dCMP + ATP = dCDP + ADP. The protein is Cytidylate kinase of Methanococcoides burtonii (strain DSM 6242 / NBRC 107633 / OCM 468 / ACE-M).